The chain runs to 843 residues: MDKENSDVSAAPADLKISNISVQVVSAQKKLPVRRPPLPGRRLPLPGRRPPQRPIGKAKPKKQSKKKVPFWNVQNKIILFTVFLFILAVIAWTLLWLYISKTESKDAFYFAGMFRITNIEFLPEYRQKESREFLSVSRTVQQVINLVYTTSAFSKFYEQSVVADVSSNNKGGLLVHFWIVFVMPRAKGHIFCEDCVAAILKDSIQTSIINRTSVGSLQGLAVDMDSVVLNAGLRSDYSSTIGSDKGCSQYFYAEHLSLHYPLEISAASGRLMCHFKLVAIVGYLIRLSIKSIQIEADNCVTDSLTIYDSLLPIRSSILYRICEPTRTLMSFVSTNNLMLVTFKSPHIRRLSGIRAYFEVIPEQKCENTVLVKDITGFEGKISSPYYPSYYPPKCKCTWKFQTSLSTLGIALKFYNYSITKKSMKGCEHGWWEINEHMYCGSYMDHQTIFRVPSPLVHIQLQCSSRLSDKPLLAEYGSYNISQPCPVGSFRCSSGLCVPQAQRCDGVNDCFDESDELFCVSPQPACNTSSFRQHGPLICDGFRDCENGRDEQNCTQSIPCNNRTFKCGNDICFRKQNAKCDGTVDCPDGSDEEGCTCSRSSSALHRIIGGTDTLEGGWPWQVSLHFVGSAYCGASVISREWLLSAAHCFHGNRLSDPTPWTAHLGMYVQGNAKFVSPVRRIVVHEYYNSQTFDYDIALLQLSIAWPETLKQLIQPICIPPTGQRVRSGEKCWVTGWGRRHEADNKGSLVLQQAEVELIDQTLCVSTYGIITSRMLCAGIMSGKRDACKGDSGGPLSCRRKSDGKWILTGIVSWGHGSGRPNFPGVYTRVSNFVPWIHKYVPSLL.

Residues 1 to 76 (MDKENSDVSA…KVPFWNVQNK (76 aa)) are Cytoplasmic-facing. The interval 27 to 67 (AQKKLPVRRPPLPGRRLPLPGRRPPQRPIGKAKPKKQSKKK) is disordered. Positions 56-67 (GKAKPKKQSKKK) are enriched in basic residues. A helical; Signal-anchor for type II membrane protein membrane pass occupies residues 77-97 (IILFTVFLFILAVIAWTLLWL). Residues 98 to 843 (YISKTESKDA…WIHKYVPSLL (746 aa)) are Extracellular-facing. Positions 106 to 234 (DAFYFAGMFR…DSVVLNAGLR (129 aa)) constitute an SEA domain. 12 cysteine pairs are disulfide-bonded: C247–C273, C299–C322, C365–C396, C484–C496, C491–C509, C503–C518, C525–C544, C538–C553, C559–C571, C566–C585, C579–C594, and C631–C647. CUB domains are found at residues 247–360 (CSQY…FEVI) and 365–481 (CENT…YNIS). LDL-receptor class A domains are found at residues 483–519 (PCPV…LFCV), 517–554 (FCVS…QNCT), and 558–595 (PCNN…EGCT). One can recognise a Peptidase S1 domain in the interval 606 to 840 (IIGGTDTLEG…FVPWIHKYVP (235 aa)). Active-site charge relay system residues include H646 and D694. 2 disulfides stabilise this stretch: C730/C796 and C762/C775. S790 acts as the Charge relay system in catalysis.

The protein belongs to the peptidase S1 family. In terms of assembly, forms a heterodimer with SERPINA5. Post-translationally, N-glycosylated. Expressed in brain, ovary, testis, salivary gland, trachea and lung.

Its subcellular location is the cell membrane. In terms of biological role, serine protease which preferentially hydrolyzes peptides with Arg at the P1 position. In Homo sapiens (Human), this protein is Transmembrane protease serine 7 (TMPRSS7).